A 500-amino-acid chain; its full sequence is Probable transcription factor FPSE_09189 (500 aa).

2 disordered regions span residues 161 to 197 (MVRH…PSLA) and 457 to 500 (IRTG…TQLE). The span at 459–474 (TGHEDSSRDGGRENKA) shows a compositional bias: basic and acidic residues. The segment covering 475-484 (MNRNRSTGNS) has biased composition (polar residues).

The protein localises to the nucleus. In terms of biological role, the two putative transcription factors FPSE_09188 and FPSE_09189 could be responsible for orchestrating expression of the W493 A and B biosynthesis cluster genes. W493 A and B consist of six amino acid residues D-allo-thr, L-Ala, D-Ala, L-Gln, D-Tyr, and L-Val/L-Ile linked to a 3-hydroxy-4-methyltetradecanoic acid polyketide chain. The sequence is that of Probable transcription factor FPSE_09189 from Fusarium pseudograminearum (strain CS3096) (Wheat and barley crown-rot fungus).